We begin with the raw amino-acid sequence, 255 residues long: Small ribosomal subunit protein uS2 (255 aa).

The segment at 230–255 (QGSSGRDLGASSEVPVEPALEEAAEG) is disordered.

The protein belongs to the universal ribosomal protein uS2 family.

The chain is Small ribosomal subunit protein uS2 from Rhizobium johnstonii (strain DSM 114642 / LMG 32736 / 3841) (Rhizobium leguminosarum bv. viciae).